Reading from the N-terminus, the 247-residue chain is Small ribosomal subunit protein uS2 (247 aa).

This sequence belongs to the universal ribosomal protein uS2 family.

This is Small ribosomal subunit protein uS2 from Ectopseudomonas mendocina (strain ymp) (Pseudomonas mendocina).